Consider the following 234-residue polypeptide: Uracil-DNA glycosylase (234 aa).

Residue Asp-68 is the Proton acceptor of the active site.

It belongs to the uracil-DNA glycosylase (UDG) superfamily. UNG family.

It is found in the cytoplasm. It catalyses the reaction Hydrolyzes single-stranded DNA or mismatched double-stranded DNA and polynucleotides, releasing free uracil.. In terms of biological role, excises uracil residues from the DNA which can arise as a result of misincorporation of dUMP residues by DNA polymerase or due to deamination of cytosine. The chain is Uracil-DNA glycosylase from Ruegeria sp. (strain TM1040) (Silicibacter sp.).